We begin with the raw amino-acid sequence, 234 residues long: Uridylate kinase (234 aa).

10–11 (GS) provides a ligand contact to ATP. Residue Gly44 coordinates UMP. The ATP site is built by Gly45 and Arg49. UMP is bound by residues Asp66 and 114–120 (ITPAQTT). ATP-binding residues include Thr140, Tyr146, and Asp149.

It belongs to the UMP kinase family. In terms of assembly, homohexamer.

It is found in the cytoplasm. The enzyme catalyses UMP + ATP = UDP + ADP. Its pathway is pyrimidine metabolism; CTP biosynthesis via de novo pathway; UDP from UMP (UMPK route): step 1/1. With respect to regulation, inhibited by UTP. In terms of biological role, catalyzes the reversible phosphorylation of UMP to UDP. The chain is Uridylate kinase from Methanoculleus marisnigri (strain ATCC 35101 / DSM 1498 / JR1).